A 275-amino-acid polypeptide reads, in one-letter code: Probable ribosomal RNA small subunit methyltransferase A (275 aa).

Residues Leu-13, Gly-38, Glu-59, Asp-84, and Asn-101 each coordinate S-adenosyl-L-methionine.

It belongs to the class I-like SAM-binding methyltransferase superfamily. rRNA adenine N(6)-methyltransferase family. RsmA subfamily.

It localises to the cytoplasm. Functionally, specifically dimethylates two adjacent adenosines in the loop of a conserved hairpin near the 3'-end of 16S rRNA in the 30S particle. May play a critical role in biogenesis of 30S subunits. This chain is Probable ribosomal RNA small subunit methyltransferase A, found in Methanocaldococcus jannaschii (strain ATCC 43067 / DSM 2661 / JAL-1 / JCM 10045 / NBRC 100440) (Methanococcus jannaschii).